A 412-amino-acid polypeptide reads, in one-letter code: rRNA methyltransferase 1, mitochondrial (412 aa).

The N-terminal 20 residues, 1–20 (MTSLTNAVFKRYLAVTPSAH), are a transit peptide targeting the mitochondrion.

This sequence belongs to the class IV-like SAM-binding methyltransferase superfamily. RNA methyltransferase TrmH family.

The protein resides in the mitochondrion. It carries out the reaction guanosine(2270) in 21S rRNA + S-adenosyl-L-methionine = 2'-O-methylguanosine(2270) in 21S rRNA + S-adenosyl-L-homocysteine + H(+). Its function is as follows. S-adenosyl-L-methionine-dependent 2'-O-ribose methyltransferase that catalyzes the formation of 2'-O-methylguanosine at position 2270 (Gm2270) in the 21S mitochondrial large subunit ribosomal RNA (mtLSU rRNA), a universally conserved modification in the peptidyl transferase domain of the mtLSU rRNA. This modification seems to be important for the normal accumulation of the mitochondrial large ribosomal subunit. This Saccharomyces cerevisiae (strain ATCC 204508 / S288c) (Baker's yeast) protein is rRNA methyltransferase 1, mitochondrial.